The sequence spans 1342 residues: DNA-directed RNA polymerase subunit beta (1342 aa).

N6-acetyllysine occurs at positions 1022 and 1200.

The protein belongs to the RNA polymerase beta chain family. As to quaternary structure, the RNAP catalytic core consists of 2 alpha, 1 beta, 1 beta' and 1 omega subunit. When a sigma factor is associated with the core the holoenzyme is formed, which can initiate transcription.

The catalysed reaction is RNA(n) + a ribonucleoside 5'-triphosphate = RNA(n+1) + diphosphate. DNA-dependent RNA polymerase catalyzes the transcription of DNA into RNA using the four ribonucleoside triphosphates as substrates. This chain is DNA-directed RNA polymerase subunit beta, found in Escherichia coli O6:K15:H31 (strain 536 / UPEC).